A 475-amino-acid chain; its full sequence is Adenosylhomocysteinase (475 aa).

Substrate-binding residues include Thr-61, Asp-140, and Glu-200. 201 to 203 (TTT) provides a ligand contact to NAD(+). Positions 230 and 234 each coordinate substrate. Residues Asn-235, 264–269 (GYGDVG), Glu-287, Asn-322, 343–345 (IGH), and Asn-388 contribute to the NAD(+) site.

Belongs to the adenosylhomocysteinase family. Requires NAD(+) as cofactor.

Its subcellular location is the cytoplasm. The catalysed reaction is S-adenosyl-L-homocysteine + H2O = L-homocysteine + adenosine. Its pathway is amino-acid biosynthesis; L-homocysteine biosynthesis; L-homocysteine from S-adenosyl-L-homocysteine: step 1/1. Its function is as follows. May play a key role in the regulation of the intracellular concentration of adenosylhomocysteine. The chain is Adenosylhomocysteinase from Paracidovorax citrulli (strain AAC00-1) (Acidovorax citrulli).